The sequence spans 187 residues: Putative lipoprotein LppJ (187 aa).

Residues M1–G28 form the signal peptide. Residue C29 is the site of N-palmitoyl cysteine attachment. C29 is lipidated: S-diacylglycerol cysteine.

It localises to the cell membrane. The polypeptide is Putative lipoprotein LppJ (lppJ) (Mycobacterium bovis (strain ATCC BAA-935 / AF2122/97)).